Consider the following 234-residue polypeptide: ASKGNGRGPYVQADLAYAAERITHDYPEPTGAKKAQLSTVSDYFRNIRTHSIHPRVSVGYDFGGWRIAADYARYRKWKESNSSIKKVTEDIKDNYKETKTEHQENGTFHAVSSLGLSTIYDFQISDKIKPYIGVRVGYGHVRHQVRSVGQETITVTPKPKNGTQGGPVKSTSPIPAYHENRSSRRLGFGAMAGVGIDVAPGLTLDAGYRYHYWGRLENTRFKTHEASLGVRYRF.

Residue Ala1 is a signal peptide. Residues 154 to 179 (TVTPKPKNGTQGGPVKSTSPIPAYHE) form a disordered region.

The protein belongs to the opacity porin family.

The protein localises to the cell outer membrane. Functionally, implicated in a number of adherence functions. OPA proteins are implicated in pathogenesis and are subject to phase variation. This is Opacity protein opA65 from Neisseria gonorrhoeae.